Consider the following 467-residue polypeptide: Stromal membrane-associated protein 1 (467 aa).

The Arf-GAP domain maps to 18–136 (QLILSKLLRE…KYYDKNAIAI (119 aa)). Residues 33-56 (CADCEAKGPRWASWNIGVFICIRC) form a C4-type zinc finger. Residues 145 to 155 (PLQPLVSSPSL) are compositionally biased toward polar residues. 2 disordered regions span residues 145–224 (PLQP…LDGP) and 408–467 (KFGL…QLWK). 2 stretches are compositionally biased toward basic and acidic residues: residues 160–185 (DKNKLEKEKEKKKEEKKREKEPEKPA) and 192–204 (KLQKKDQQLEPKK). Residues 218 to 222 (LLGLD) carry the Interaction with clathrin heavy chains motif. Polar residues predominate over residues 413–438 (QAQQPQWSLSQMNQQMAGMSISSATP). Residues 446–467 (SSTTAGWSGSSSGQTLSTQLWK) show a composition bias toward low complexity.

As to quaternary structure, interacts with ARF6. Interacts with clathrin heavy chains via the clathrin box-like motif. As to expression, detected in bone marrow, adrenal gland, trachea, lymph node, spinal cord, peripheral blood leukocytes, thyroid and stomach.

Its subcellular location is the cell membrane. Its function is as follows. GTPase activating protein that acts on ARF6. Plays a role in clathrin-dependent endocytosis. May play a role in erythropoiesis. The chain is Stromal membrane-associated protein 1 (SMAP1) from Homo sapiens (Human).